A 395-amino-acid chain; its full sequence is S-adenosylmethionine synthase (395 aa).

ATP is bound at residue H16. D18 contributes to the Mg(2+) binding site. E44 provides a ligand contact to K(+). Residues E57 and Q100 each coordinate L-methionine. The interval 100–110 is flexible loop; it reads QSPDIAQGVDR. ATP-binding positions include 167–169, 233–234, D242, 248–249, A265, and K269; these read DAK, RF, and RK. D242 provides a ligand contact to L-methionine. An L-methionine-binding site is contributed by K273.

This sequence belongs to the AdoMet synthase family. In terms of assembly, homotetramer; dimer of dimers. Mg(2+) is required as a cofactor. K(+) serves as cofactor.

The protein resides in the cytoplasm. It catalyses the reaction L-methionine + ATP + H2O = S-adenosyl-L-methionine + phosphate + diphosphate. It functions in the pathway amino-acid biosynthesis; S-adenosyl-L-methionine biosynthesis; S-adenosyl-L-methionine from L-methionine: step 1/1. Its function is as follows. Catalyzes the formation of S-adenosylmethionine (AdoMet) from methionine and ATP. The overall synthetic reaction is composed of two sequential steps, AdoMet formation and the subsequent tripolyphosphate hydrolysis which occurs prior to release of AdoMet from the enzyme. In Burkholderia ambifaria (strain MC40-6), this protein is S-adenosylmethionine synthase.